Consider the following 342-residue polypeptide: Bifunctional terpene synthase Agr4 (342 aa).

Asp-87, Asn-222, Ser-226, and Glu-230 together coordinate Mg(2+). The DDXXD motif signature appears at 87 to 91 (DEVSD). The (2E,6E)-farnesyl diphosphate site is built by Arg-308 and Tyr-309.

This sequence belongs to the terpene synthase family. The cofactor is Mg(2+).

The catalysed reaction is (2E,6E)-farnesyl diphosphate = delta-cadinene + diphosphate. It catalyses the reaction (2E,6E)-farnesyl diphosphate = gamma-muurolene + diphosphate. The enzyme catalyses (2E,6E)-farnesyl diphosphate = beta-copaene + diphosphate. It carries out the reaction (2E)-geranyl diphosphate = beta-myrcene + diphosphate. In terms of biological role, terpene cyclase that catalyzes the cyclization of farnesyl diphosphate (FPP) to various sesquiterpenes, including beta-copaene, alpha-cubebene, cadina-1(6),4-diene, gamma-muurolene, delta-cadinene, epizonarene, epicubenol and cubenol. Agr4 is also able to use the monoterpene precursor geranyl diphosphate (GPP) as substrates to synthesize the monoterpene beta-myrcene. Delta-cadinene is the major product of Agr4. This Cyclocybe aegerita (Black poplar mushroom) protein is Bifunctional terpene synthase Agr4.